Reading from the N-terminus, the 391-residue chain is mRNA-capping enzyme subunit alpha (391 aa).

Lys63 (N6-GMP-lysine intermediate) is an active-site residue. The disordered stretch occupies residues 363–391 (KERNRRPRDEDRKRVGGDDHDHGAKRARQ).

This sequence belongs to the eukaryotic GTase family. In terms of assembly, heterodimer. The mRNA-capping enzyme is composed of two separate chains alpha and beta, respectively a mRNA guanylyltransferase and an mRNA 5'-triphosphate monophosphatase.

The protein resides in the nucleus. The enzyme catalyses a 5'-end diphospho-ribonucleoside in mRNA + GTP + H(+) = a 5'-end (5'-triphosphoguanosine)-ribonucleoside in mRNA + diphosphate. Functionally, second step of mRNA capping. Transfer of the GMP moiety of GTP to the 5'-end of RNA via an enzyme-GMP covalent reaction intermediate. The protein is mRNA-capping enzyme subunit alpha (CEG1) of Yarrowia lipolytica (strain CLIB 122 / E 150) (Yeast).